Reading from the N-terminus, the 316-residue chain is Methionyl-tRNA formyltransferase (316 aa).

Residue 109–112 participates in (6S)-5,6,7,8-tetrahydrofolate binding; sequence SLLP.

Belongs to the Fmt family.

The catalysed reaction is L-methionyl-tRNA(fMet) + (6R)-10-formyltetrahydrofolate = N-formyl-L-methionyl-tRNA(fMet) + (6S)-5,6,7,8-tetrahydrofolate + H(+). Functionally, attaches a formyl group to the free amino group of methionyl-tRNA(fMet). The formyl group appears to play a dual role in the initiator identity of N-formylmethionyl-tRNA by promoting its recognition by IF2 and preventing the misappropriation of this tRNA by the elongation apparatus. This Nitrosomonas eutropha (strain DSM 101675 / C91 / Nm57) protein is Methionyl-tRNA formyltransferase.